The primary structure comprises 70 residues: MWFEILPGLAIMGVCLVIPGVSTAYIHKFTNGGKEKRVARVQYQWYLMERDRRISGVNRYYVSKGLENID.

The chain crosses the membrane as a helical span at residues 1 to 21 (MWFEILPGLAIMGVCLVIPGV).

The protein belongs to the complex I NDUFA1 subunit family. As to quaternary structure, complex I is composed of 45 different subunits.

Its subcellular location is the mitochondrion inner membrane. In terms of biological role, accessory subunit of the mitochondrial membrane respiratory chain NADH dehydrogenase (Complex I), that is believed not to be involved in catalysis. Complex I functions in the transfer of electrons from NADH to the respiratory chain. The immediate electron acceptor for the enzyme is believed to be ubiquinone. In Mus musculus (Mouse), this protein is NADH dehydrogenase [ubiquinone] 1 alpha subcomplex subunit 1 (Ndufa1).